The following is a 494-amino-acid chain: Glutamyl-tRNA(Gln) amidotransferase subunit A (494 aa).

Active-site charge relay system residues include K81 and S156. S180 acts as the Acyl-ester intermediate in catalysis.

It belongs to the amidase family. GatA subfamily. In terms of assembly, heterotrimer of A, B and C subunits.

The catalysed reaction is L-glutamyl-tRNA(Gln) + L-glutamine + ATP + H2O = L-glutaminyl-tRNA(Gln) + L-glutamate + ADP + phosphate + H(+). Functionally, allows the formation of correctly charged Gln-tRNA(Gln) through the transamidation of misacylated Glu-tRNA(Gln) in organisms which lack glutaminyl-tRNA synthetase. The reaction takes place in the presence of glutamine and ATP through an activated gamma-phospho-Glu-tRNA(Gln). The sequence is that of Glutamyl-tRNA(Gln) amidotransferase subunit A from Mycolicibacterium gilvum (strain PYR-GCK) (Mycobacterium gilvum (strain PYR-GCK)).